The sequence spans 1317 residues: Nucleoporin NUP145 (1317 aa).

Positions 1–16 (MFNKSVNSGFTFGNQN) are enriched in polar residues. Residues 1 to 36 (MFNKSVNSGFTFGNQNTSTPTSTPAQPSSSLQFPQK) form a disordered region. The stretch at 12-13 (FG) is one FG 1 repeat. The span at 17 to 30 (TSTPTSTPAQPSSS) shows a compositional bias: low complexity. The stretch at 39 to 42 (GLFG) is one GLFG 1 repeat. The stretch at 79–80 (FG) is one FG 2 repeat. One copy of the GLFG 2 repeat lies at 89 to 92 (GLFG). One copy of the FG 3 repeat lies at 106–107 (FG). The interval 133 to 165 (QNGGLFGNSNNNNITSTTQNGGLFGKPTTTPAG) is disordered. GLFG repeat units lie at residues 136–139 (GLFG), 154–157 (GLFG), 168–171 (GLFG), and 181–184 (GLFG). Over residues 139 to 164 (GNSNNNNITSTTQNGGLFGKPTTTPA) the composition is skewed to low complexity. The GLFG 7; approximate repeat unit spans residues 193 to 196 (GIFG). Residues 206-209 (GLFG) form a GLFG 8 repeat. The segment at 249-278 (TSSLSDVNGKSDAEPKPIENRRTYSFSSSV) is disordered. A compositionally biased stretch (basic and acidic residues) spans 257–270 (GKSDAEPKPIENRR). Serine 273 carries the post-translational modification Phosphoserine. Residues 369–385 (RKLKIDSNRSAAKKLKL) carry the Bipartite nuclear localization signal motif. The segment at 390–450 (PAITKKHMQD…NLNKQDGENT (61 aa)) is disordered. The segment at 398-523 (QDEQDSSENE…FGKIVIFRSS (126 aa)) is required for autocatalytic cleavage. Phosphoserine is present on residues serine 403, serine 404, and serine 414. Positions 418–427 (IDRKENRDNN) are enriched in basic and acidic residues. Residues 428–444 (LDNTYLNGKEQSNNLNK) are compositionally biased toward polar residues. Residues 458-605 (SFGYWCSPSP…GTWTFKVNHF (148 aa)) enclose the Peptidase S59 domain. A nucleoporin RNA-binding motif (NRM) region spans residues 460–604 (GYWCSPSPEQ…GGTWTFKVNH (145 aa)). Phosphoserine is present on residues serine 667, serine 679, and serine 689. Residue threonine 751 is modified to Phosphothreonine.

Belongs to the nucleoporin GLFG family. Component of the nuclear pore complex (NPC). NPC constitutes the exclusive means of nucleocytoplasmic transport. NPCs allow the passive diffusion of ions and small molecules and the active, nuclear transport receptor-mediated bidirectional transport of macromolecules such as proteins, RNAs, ribonucleoparticles (RNPs), and ribosomal subunits across the nuclear envelope. Due to its 8-fold rotational symmetry, all subunits are present with 8 copies or multiples thereof. NUP145C is part of the heptameric 0.5 MDa autoassembling NUP84 NPC subcomplex (NUP84, NUP85, NUP120, NUP133, NUP145C, SEC13 and SEH1). NUP145N may bind homomeric RNA and interacts through its FG repeats with karyopherins. Interacts with MLP1 and MLP2. In terms of processing, NUP145 is autocatalytically cleaved in NUP145N and NUP145C.

It localises to the nucleus. The protein resides in the nuclear pore complex. It is found in the nucleus membrane. In terms of biological role, functions as a component of the nuclear pore complex (NPC). NPC components, collectively referred to as nucleoporins (NUPs), can play the role of both NPC structural components and of docking or interaction partners for transiently associated nuclear transport factors. Active directional transport is assured by both, a Phe-Gly (FG) repeat affinity gradient for these transport factors across the NPC and a transport cofactor concentration gradient across the nuclear envelope (GSP1 and GSP2 GTPases associated predominantly with GTP in the nucleus, with GDP in the cytoplasm). NUP145 is autocatalytically cleaved in vivo in 2 polypeptides which assume different functions in the NPC. NUP145N as one of the FG repeat nucleoporins participates in karyopherin interactions and contains part of the autocatalytic cleavage activity. NUP145C as part of the NUP84 complex is involved in nuclear poly(A)+ RNA and tRNA export. It is also required for normal NPC distribution (probably through interactions with MLP1 and MLP2) and NPC assembly, as well as for normal nuclear envelope organization. This chain is Nucleoporin NUP145 (NUP145), found in Saccharomyces cerevisiae (strain ATCC 204508 / S288c) (Baker's yeast).